Here is a 421-residue protein sequence, read N- to C-terminus: Enolase (421 aa).

Gln-165 contacts (2R)-2-phosphoglycerate. Glu-207 acts as the Proton donor in catalysis. 3 residues coordinate Mg(2+): Asp-244, Glu-285, and Asp-312. Positions 337, 366, 367, and 388 each coordinate (2R)-2-phosphoglycerate. Lys-337 serves as the catalytic Proton acceptor.

Belongs to the enolase family. It depends on Mg(2+) as a cofactor.

It is found in the cytoplasm. The protein localises to the secreted. The protein resides in the cell surface. It catalyses the reaction (2R)-2-phosphoglycerate = phosphoenolpyruvate + H2O. It functions in the pathway carbohydrate degradation; glycolysis; pyruvate from D-glyceraldehyde 3-phosphate: step 4/5. In terms of biological role, catalyzes the reversible conversion of 2-phosphoglycerate (2-PG) into phosphoenolpyruvate (PEP). It is essential for the degradation of carbohydrates via glycolysis. The polypeptide is Enolase (Ehrlichia chaffeensis (strain ATCC CRL-10679 / Arkansas)).